Reading from the N-terminus, the 224-residue chain is MADS-box transcription factor 16 (224 aa).

An MADS-box domain is found at 1–61 (MGRGKIEIKR…GKYHEFCSPS (61 aa)). Positions 84-174 (YENMQRTLSH…QQELGLREEP (91 aa)) constitute a K-box domain.

In terms of assembly, may interact with the K-box of MADS4, MADS6 and MADS8. May form a heterodimer with MADS4. Expressed in lodicules, stamens and carpels.

The protein resides in the nucleus. Functionally, probable transcription factor involved in the development of floral organs. Required for normal development of lodicules and stamens (whorls 2 and 3). May function as a heterodimer with MADS4. The polypeptide is MADS-box transcription factor 16 (MADS16) (Oryza sativa subsp. japonica (Rice)).